We begin with the raw amino-acid sequence, 152 residues long: Phospholipase A2 pkP2 (152 aa).

The N-terminal stretch at 1–21 is a signal peptide; the sequence is MNPAHLLVLLAVCVSLLGASA. Positions 22–27 are excised as a propeptide; that stretch reads IPPLPL. 7 disulfides stabilise this stretch: Cys-38–Cys-104, Cys-54–Cys-151, Cys-56–Cys-72, Cys-71–Cys-132, Cys-78–Cys-125, Cys-88–Cys-118, and Cys-111–Cys-123. Tyr-55, Gly-57, and Gly-59 together coordinate Ca(2+). The active site involves His-75. A Ca(2+)-binding site is contributed by Asp-76. The active site involves Asp-126.

The protein belongs to the phospholipase A2 family. Group I subfamily. Ca(2+) serves as cofactor.

Its subcellular location is the secreted. The enzyme catalyses a 1,2-diacyl-sn-glycero-3-phosphocholine + H2O = a 1-acyl-sn-glycero-3-phosphocholine + a fatty acid + H(+). Functionally, PA2 catalyzes the calcium-dependent hydrolysis of the 2-acyl groups in 3-sn-phosphoglycerides. This chain is Phospholipase A2 pkP2, found in Laticauda semifasciata (Black-banded sea krait).